Reading from the N-terminus, the 281-residue chain is uncharacterized protein (281 aa).

An N-terminal signal peptide occupies residues 1–23; sequence MKLYRSLKAALLPGICTSILLAS. The N-palmitoyl cysteine moiety is linked to residue C24. The S-diacylglycerol cysteine moiety is linked to residue C24. A disordered region spans residues 145-165; sequence HHDHNHMHNHEHEHEEHHDEE. Residues 150–161 are compositionally biased toward basic and acidic residues; the sequence is HMHNHEHEHEEH.

It is found in the cell membrane. This is an uncharacterized protein from Mycoplasma genitalium (strain ATCC 33530 / DSM 19775 / NCTC 10195 / G37) (Mycoplasmoides genitalium).